We begin with the raw amino-acid sequence, 236 residues long: uncharacterized protein (236 aa).

In terms of domain architecture, DPCK spans 3-208; it reads ILGLTGSIAT…PSYFFTLLCL (206 aa). Residue 8 to 15 coordinates ATP; the sequence is GSIATGKS. A phosphoserine mark is found at serine 82 and serine 86.

This sequence belongs to the CoaE family.

It is found in the cytoplasm. This is an uncharacterized protein from Schizosaccharomyces pombe (strain 972 / ATCC 24843) (Fission yeast).